Here is a 593-residue protein sequence, read N- to C-terminus: CTD kinase subunit alpha (593 aa).

2 stretches are compositionally biased toward polar residues: residues Met1–Asn17 and Gln29–Asn51. The interval Met1–Pro262 is disordered. 2 positions are modified to phosphoserine: Ser56 and Ser58. Residues Arg90–Phe103 show a composition bias toward basic residues. Phosphoserine occurs at positions 104 and 109. Positions Ser139–Ala152 are enriched in low complexity. The span at Gln160–Ser170 shows a compositional bias: polar residues. Positions Ile198 to Ser215 are enriched in low complexity. A Protein kinase domain is found at Tyr277 to Phe561. ATP is bound by residues Ile283–Val291 and Lys306. Asp399 functions as the Proton acceptor in the catalytic mechanism.

It belongs to the protein kinase superfamily. CMGC Ser/Thr protein kinase family. CDC2/CDKX subfamily. As to quaternary structure, CTDK-I consists of three subunits, ctk1/lsk1, ctk2/lsc1 and ctk3 (also called alpha, beta and gamma). Interacts with ctk2/lsc1. This interaction is dependent on kinase activity.

It is found in the nucleus. The protein localises to the nucleolus. It catalyses the reaction [DNA-directed RNA polymerase] + ATP = phospho-[DNA-directed RNA polymerase] + ADP + H(+). Its function is as follows. Catalytic subunit of the CTDK-I complex, which hyperphosphorylates the C-terminal heptapeptide repeat domain (CTD) of the largest RNA polymerase II subunit. Involved in RNA polymerase II transcriptional elongation and pre-mRNA 3'-end processing. Together with ctk2/lsc1, required for the regulation of cytokinesis by phosphorylating 'Ser-2' residues found in the heptad repeats of the CTD. Required for nuclear localization of ctk2/lsc1. Positively regulates the septation initiation network (SIN) and promotes successful completion of cytokinesis in response to perturbation of the actomyosin ring. Acts in parallel to clp1 to promote actomyosin ring stability upon cytokinesis checkpoint activation. The polypeptide is CTD kinase subunit alpha (Schizosaccharomyces pombe (strain 972 / ATCC 24843) (Fission yeast)).